A 322-amino-acid polypeptide reads, in one-letter code: tRNA U34 carboxymethyltransferase (322 aa).

Carboxy-S-adenosyl-L-methionine is bound by residues Lys-90, Trp-104, Lys-109, Gly-129, 151 to 153 (DPS), 180 to 181 (IE), Met-196, Tyr-200, and Arg-315.

The protein belongs to the class I-like SAM-binding methyltransferase superfamily. CmoB family. Homotetramer.

The catalysed reaction is carboxy-S-adenosyl-L-methionine + 5-hydroxyuridine(34) in tRNA = 5-carboxymethoxyuridine(34) in tRNA + S-adenosyl-L-homocysteine + H(+). In terms of biological role, catalyzes carboxymethyl transfer from carboxy-S-adenosyl-L-methionine (Cx-SAM) to 5-hydroxyuridine (ho5U) to form 5-carboxymethoxyuridine (cmo5U) at position 34 in tRNAs. The chain is tRNA U34 carboxymethyltransferase from Cellvibrio japonicus (strain Ueda107) (Pseudomonas fluorescens subsp. cellulosa).